The sequence spans 562 residues: MNWLKTTLQIYPEIAVFLSLAIGYWVGNKTFKGFSLGAVTATLLAAVVIGQFDITLSSNVKSIFFLMFLFAVGYGIGPQFVQGIAKDGLPQALFAVVACLFSLLFPILCAKIAGYDLGATAGFFAGTQTISASMGLATDAIVHLDLPAEESKKMFSVIPVAYAVTYIFGTVGSAIVLAQIIPKLLRIDLEAACKDYMAKNGGTTENARGEWHTYALRSYKLTEKNRAVGMTIHEFEAQFPHRKVFVEGLRHEGKVIDTDPNSKLSTGDIIAVGGEYDAFVEFFDHPDSFDETQDSELLNQPVLGVDVYVTSRGINGKTLAELGKTTSSHGIFLRKIKRGPKAIEIPILPQTRLFRGDILTLSGLTKDVERVTKQLGVIDQRGNSMDVAFWAFAIVIGALLGSLVFKIGNLPLTLSTAGGVLIAGLIFSWVRSFHPTFGWVPEPTVWFMNSVGLNVFIAAIGISAGPNFVAGLKELGFSLFLWGVVATTLPLFFAALVGKYVFKFHPAILLGCCAGARTTTASLGMINEKAKSNIPSLGYTITYAVGNTLLTMWGLVLILILT.

The next 5 helical transmembrane spans lie at 10-27 (IYPEIAVFLSLAIGYWVG), 34-53 (FSLGAVTATLLAAVVIGQFD), 63-85 (IFFLMFLFAVGYGIGPQFVQGIA), 92-114 (ALFAVVACLFSLLFPILCAKIAG), and 155-177 (FSVIPVAYAVTYIFGTVGSAIVL). 2 RCK C-terminal domains span residues 204–288 (TENA…HPDS) and 290–377 (DETQ…QLGV). Transmembrane regions (helical) follow at residues 387–404 (VAFWAFAIVIGALLGSLV), 408–430 (GNLPLTLSTAGGVLIAGLIFSWV), 443–465 (PTVWFMNSVGLNVFIAAIGISAG), 475–497 (LGFSLFLWGVVATTLPLFFAALV), 504–526 (FHPAILLGCCAGARTTTASLGMI), and 539–561 (YTITYAVGNTLLTMWGLVLILIL).

It belongs to the AAE transporter (TC 2.A.81) family.

It is found in the cell membrane. This is an uncharacterized protein from Shewanella oneidensis (strain ATCC 700550 / JCM 31522 / CIP 106686 / LMG 19005 / NCIMB 14063 / MR-1).